Reading from the N-terminus, the 215-residue chain is Keratin-associated protein 26-1 (215 aa).

This sequence belongs to the PMG family. As to quaternary structure, interacts with hair keratins.

In terms of biological role, in the hair cortex, hair keratin intermediate filaments are embedded in an interfilamentous matrix, consisting of hair keratin-associated proteins (KRTAP), which are essential for the formation of a rigid and resistant hair shaft through their extensive disulfide bond cross-linking with abundant cysteine residues of hair keratins. The matrix proteins include the high-sulfur and high-glycine-tyrosine keratins. This is Keratin-associated protein 26-1 from Mus musculus (Mouse).